A 339-amino-acid chain; its full sequence is NADH-quinone oxidoreductase subunit H (339 aa).

The next 8 membrane-spanning stretches (helical) occupy residues 19–39 (LLKI…LTLA), 87–107 (FLLG…VVPF), 120–140 (LLYI…AGWA), 153–173 (SAAQ…GVLM), 191–211 (FWEW…ISAV), 253–273 (ILVA…PVPF), 275–295 (PDSI…FLWF), and 310–330 (LGWK…GAMM).

The protein belongs to the complex I subunit 1 family. In terms of assembly, NDH-1 is composed of 14 different subunits. Subunits NuoA, H, J, K, L, M, N constitute the membrane sector of the complex.

The protein resides in the cell inner membrane. The enzyme catalyses a quinone + NADH + 5 H(+)(in) = a quinol + NAD(+) + 4 H(+)(out). NDH-1 shuttles electrons from NADH, via FMN and iron-sulfur (Fe-S) centers, to quinones in the respiratory chain. The immediate electron acceptor for the enzyme in this species is believed to be ubiquinone. Couples the redox reaction to proton translocation (for every two electrons transferred, four hydrogen ions are translocated across the cytoplasmic membrane), and thus conserves the redox energy in a proton gradient. This subunit may bind ubiquinone. The chain is NADH-quinone oxidoreductase subunit H from Methylobacillus flagellatus (strain ATCC 51484 / DSM 6875 / VKM B-1610 / KT).